Consider the following 372-residue polypeptide: Putative aminopeptidase SgcX (372 aa).

2 residues coordinate a divalent metal cation: H67 and D180. Catalysis depends on E212, which acts as the Proton acceptor. E213, D235, and H329 together coordinate a divalent metal cation.

It belongs to the peptidase M42 family. A divalent metal cation is required as a cofactor.

In Salmonella typhimurium (strain LT2 / SGSC1412 / ATCC 700720), this protein is Putative aminopeptidase SgcX (sgcX).